Reading from the N-terminus, the 294-residue chain is Undecaprenyl-diphosphatase (294 aa).

Helical transmembrane passes span 39–59 (PGAA…ILYF), 93–113 (TQMG…GLLF), 123–143 (NLWI…VVDA), 197–217 (VSFL…AVSA), 234–254 (ATIA…IGFL), and 265–285 (FAIY…CGVL).

It belongs to the UppP family.

It localises to the cell membrane. It carries out the reaction di-trans,octa-cis-undecaprenyl diphosphate + H2O = di-trans,octa-cis-undecaprenyl phosphate + phosphate + H(+). Catalyzes the dephosphorylation of undecaprenyl diphosphate (UPP). Confers resistance to bacitracin. This chain is Undecaprenyl-diphosphatase, found in Bifidobacterium adolescentis (strain ATCC 15703 / DSM 20083 / NCTC 11814 / E194a).